Reading from the N-terminus, the 315-residue chain is Glycerol-3-phosphate dehydrogenase [NAD(P)+] (315 aa).

NADPH-binding residues include Trp24, Arg44, Arg45, and Lys92. Residues Lys92 and Gly120 each contribute to the sn-glycerol 3-phosphate site. Ser124 contacts NADPH. Residues Lys175, Asp228, Ser238, Arg239, and Asn240 each contribute to the sn-glycerol 3-phosphate site. The active-site Proton acceptor is Lys175. Position 239 (Arg239) interacts with NADPH. Residue Glu265 participates in NADPH binding.

The protein belongs to the NAD-dependent glycerol-3-phosphate dehydrogenase family.

It localises to the cytoplasm. It carries out the reaction sn-glycerol 3-phosphate + NAD(+) = dihydroxyacetone phosphate + NADH + H(+). It catalyses the reaction sn-glycerol 3-phosphate + NADP(+) = dihydroxyacetone phosphate + NADPH + H(+). It participates in membrane lipid metabolism; glycerophospholipid metabolism. Functionally, catalyzes the reduction of the glycolytic intermediate dihydroxyacetone phosphate (DHAP) to sn-glycerol 3-phosphate (G3P), the key precursor for phospholipid synthesis. The protein is Glycerol-3-phosphate dehydrogenase [NAD(P)+] of Synechococcus sp. (strain JA-2-3B'a(2-13)) (Cyanobacteria bacterium Yellowstone B-Prime).